The following is a 597-amino-acid chain: Elongation factor 4 (597 aa).

The region spanning 2 to 184 is the tr-type G domain; it reads DHIRNFSIIA…ALIAKVPPPK (183 aa). Residues 14 to 19 and 131 to 134 contribute to the GTP site; these read DHGKST and NKID.

This sequence belongs to the TRAFAC class translation factor GTPase superfamily. Classic translation factor GTPase family. LepA subfamily.

The protein localises to the cell inner membrane. It catalyses the reaction GTP + H2O = GDP + phosphate + H(+). Required for accurate and efficient protein synthesis under certain stress conditions. May act as a fidelity factor of the translation reaction, by catalyzing a one-codon backward translocation of tRNAs on improperly translocated ribosomes. Back-translocation proceeds from a post-translocation (POST) complex to a pre-translocation (PRE) complex, thus giving elongation factor G a second chance to translocate the tRNAs correctly. Binds to ribosomes in a GTP-dependent manner. The protein is Elongation factor 4 of Burkholderia vietnamiensis (strain G4 / LMG 22486) (Burkholderia cepacia (strain R1808)).